The following is a 440-amino-acid chain: tRNA(Ile)-lysidine synthase (440 aa).

31 to 36 (SGGADS) contributes to the ATP binding site.

Belongs to the tRNA(Ile)-lysidine synthase family.

It localises to the cytoplasm. The enzyme catalyses cytidine(34) in tRNA(Ile2) + L-lysine + ATP = lysidine(34) in tRNA(Ile2) + AMP + diphosphate + H(+). In terms of biological role, ligates lysine onto the cytidine present at position 34 of the AUA codon-specific tRNA(Ile) that contains the anticodon CAU, in an ATP-dependent manner. Cytidine is converted to lysidine, thus changing the amino acid specificity of the tRNA from methionine to isoleucine. This is tRNA(Ile)-lysidine synthase from Borreliella afzelii (strain PKo) (Borrelia afzelii).